Here is a 129-residue protein sequence, read N- to C-terminus: Glycerol-3-phosphate cytidylyltransferase (129 aa).

CTP-binding positions include Thr-9–Phe-10 and His-14–His-17. Substrate is bound at residue Lys-44. Lys-46 contributes to the CTP binding site. Lys-77 contacts substrate. Position 113 to 120 (Arg-113 to Thr-120) interacts with CTP.

Belongs to the cytidylyltransferase family. In terms of assembly, homodimer.

The protein resides in the cytoplasm. It carries out the reaction sn-glycerol 3-phosphate + CTP + H(+) = CDP-glycerol + diphosphate. It functions in the pathway cell wall biogenesis; poly(ribitol phosphate) teichoic acid biosynthesis. In terms of biological role, catalyzes the transfer of the cytidylyl group of CTP to sn-glycerol 3-phosphate so the activated glycerol 3-phosphate can be used for teichoic acid synthesis, via incorporation into both the linkage unit by TarB and TarF. The sequence is that of Glycerol-3-phosphate cytidylyltransferase (tarD) from Bacillus spizizenii (strain ATCC 23059 / NRRL B-14472 / W23) (Bacillus subtilis subsp. spizizenii).